The chain runs to 133 residues: Profilin (133 aa).

The protein belongs to the profilin family. As to quaternary structure, occurs in many kinds of cells as a complex with monomeric actin in a 1:1 ratio.

Its subcellular location is the cytoplasm. The protein localises to the cytoskeleton. In terms of biological role, binds to actin and affects the structure of the cytoskeleton. At high concentrations, profilin prevents the polymerization of actin, whereas it enhances it at low concentrations. By binding to PIP2, it inhibits the formation of IP3 and DG. The polypeptide is Profilin (Helianthus annuus (Common sunflower)).